The following is a 290-amino-acid chain: CMRF35-like molecule 1 (290 aa).

Positions 1 to 19 are cleaved as a signal peptide; it reads MPLLTLYLLLFWLSGYSIV. The region spanning 20 to 126 is the Ig-like V-type domain; that stretch reads TQITGPTTVN…LGVTVQVTID (107 aa). Over 20-156 the chain is Extracellular; that stretch reads TQITGPTTVN…DNRHKLLKLS (137 aa). 2 disulfides stabilise this stretch: Cys40–Cys108 and Cys54–Cys62. N-linked (GlcNAc...) asparagine glycosylation occurs at Asn88. The chain crosses the membrane as a helical span at residues 157–177; it reads VLLPLIFTILLLLLVAASLLA. The Cytoplasmic portion of the chain corresponds to 178–290; sequence WRMMKYQQKA…PTEYSTISRP (113 aa). Residues 267–290 are disordered; that stretch reads GHLSSHLPGRGPEEPTEYSTISRP.

Belongs to the CD300 family. Interacts with PTPN6/SHP-1 in a tyrosine phosphorylation dependent manner. Interacts with IL4R. Post-translationally, phosphorylated on tyrosine. In terms of tissue distribution, highly expressed in spleen, peripheral blood leukocyte and monocyte, and lung. Weakly expressed in thymus, heart, brain, placenta, liver, skeletal muscle, kidney, pancreas, prostate, testis, ovary, small intestine or colon. Expressed selectively in monocytes and monocyte-related cells.

The protein resides in the cell membrane. Its function is as follows. Acts as an inhibitory receptor for myeloid cells and mast cells. Positively regulates the phagocytosis of apoptotic cells (efferocytosis) via phosphatidylserine (PS) recognition; recognizes and binds PS as a ligand which is expressed on the surface of apoptotic cells. Plays an important role in the maintenance of immune homeostasis, by promoting macrophage-mediated efferocytosis and by inhibiting dendritic cell-mediated efferocytosis. Negatively regulates Fc epsilon receptor-dependent mast cell activation and allergic responses via binding to ceramide and sphingomyelin which act as ligands. May act as a coreceptor for interleukin 4 (IL-4). Associates with and regulates IL-4 receptor alpha-mediated responses by augmenting IL-4- and IL-13-induced signaling. Negatively regulates the Toll-like receptor (TLR) signaling mediated by MYD88 and TRIF through activation of PTPN6/SHP-1 and PTPN11/SHP-2. Inhibits osteoclast formation. Induces macrophage cell death upon engagement. This Homo sapiens (Human) protein is CMRF35-like molecule 1 (CD300LF).